A 673-amino-acid polypeptide reads, in one-letter code: Protein transport Sec1a (673 aa).

The interval 538–591 is disordered; that stretch reads SSHKEESEARTGSVRKSSAPTAVPERKATPHSMRSRRTATWARPHSSDDGYSSD.

Belongs to the STXBP/unc-18/SEC1 family. Does not bind the syntaxin KNOLLE.

In terms of biological role, involved in the vesicle trafficking. Binds syntaxins. The sequence is that of Protein transport Sec1a (SEC1A) from Arabidopsis thaliana (Mouse-ear cress).